Consider the following 291-residue polypeptide: Ribosomal RNA small subunit methyltransferase I (291 aa).

It belongs to the methyltransferase superfamily. RsmI family.

The protein localises to the cytoplasm. It carries out the reaction cytidine(1402) in 16S rRNA + S-adenosyl-L-methionine = 2'-O-methylcytidine(1402) in 16S rRNA + S-adenosyl-L-homocysteine + H(+). Catalyzes the 2'-O-methylation of the ribose of cytidine 1402 (C1402) in 16S rRNA. This Neisseria meningitidis serogroup B (strain ATCC BAA-335 / MC58) protein is Ribosomal RNA small subunit methyltransferase I.